Here is a 623-residue protein sequence, read N- to C-terminus: Prothrombin (623 aa).

The N-terminal stretch at 1-24 (MAHVGGLWLHGCLALAVLVSLVHS) is a signal peptide. A propeptide spanning residues 25–43 (QHVFMAPQQALSLLQRARR) is cleaved from the precursor. The Gla domain occupies 44–90 (ANSGFFEEMRKGNLERECVEEQCSREEAYEALESPSETDAFWAKYTA). A 4-carboxyglutamate mark is found at glutamate 50, glutamate 51, glutamate 58, glutamate 60, glutamate 63, glutamate 64, glutamate 69, glutamate 70, glutamate 73, and glutamate 76. A disulfide bridge links cysteine 61 with cysteine 66. Disulfide bonds link cysteine 91–cysteine 104, cysteine 109–cysteine 187, cysteine 130–cysteine 170, cysteine 158–cysteine 182, cysteine 214–cysteine 292, cysteine 235–cysteine 275, cysteine 263–cysteine 287, cysteine 337–cysteine 483, cysteine 392–cysteine 408, cysteine 537–cysteine 551, and cysteine 565–cysteine 595. Kringle domains follow at residues 108–187 (NCAE…IPVC) and 213–292 (TCVP…LDYC). 2 N-linked (GlcNAc...) asparagine glycosylation sites follow: asparagine 120 and asparagine 144. One can recognise a Peptidase S1 domain in the interval 365–619 (IVEGSDAEIG…LKKWMQKVID (255 aa)). Histidine 407 functions as the Charge relay system in the catalytic mechanism. An N-linked (GlcNAc...) asparagine glycan is attached at asparagine 417. The active-site Charge relay system is the aspartate 463. Positions 552 to 574 (AGYKPDEGKRGDACEGDSGGPFV) are high affinity receptor-binding region which is also known as the TP508 peptide. Serine 569 serves as the catalytic Charge relay system.

This sequence belongs to the peptidase S1 family. In terms of assembly, heterodimer (named alpha-thrombin) of a light and a heavy chain; disulfide-linked. Forms a heterodimer with SERPINA5. In plasma, interacts (via N-terminus) with alpha-1-microglobulin; this interaction does not prevent the activation of prothrombin to thrombin. In terms of processing, the gamma-carboxyglutamyl residues, which bind calcium ions, result from the carboxylation of glutamyl residues by a microsomal enzyme, the vitamin K-dependent carboxylase. The modified residues are necessary for the calcium-dependent interaction with a negatively charged phospholipid surface, which is essential for the conversion of prothrombin to thrombin. In the penultimate step of the coagulation cascade, prothrombin is converted to thrombin by the prothrombinase complex composed of factor Xa (F10), cofactor Va (F5), and phospholipids. This activation requires factor Xa-catalyzed sequential cleavage at 2 sites, Arg-315 and Arg-364, along 2 possible pathways. In the first pathway, the first cleavage occurs at Arg-315, leading to the formation of the inactive intermediate prethrombin-2. This pathway preferentially occurs on platelets and in the absence of cofactor Va. In the second pathway, the first cleavage occurs at Arg-364, which separates protease domain into 2 chains that remain connected through a disulfide bond and generates the active intermediate meizothrombin. The presence of cofactor Va directs activation along the meizothrombin pathway and greatly accelerates the rate of cleavage at Arg-364, but has a smaller effect on the cleavage of meizothrombin at Arg-315. Meizothrombin accumulates as an intermediate when prothrombinase is assembled on the membrane of red blood cells.

It carries out the reaction Selective cleavage of Arg-|-Gly bonds in fibrinogen to form fibrin and release fibrinopeptides A and B.. Its activity is regulated as follows. Activity is promoted in the presence of negatively charged surfaces, such as polyphosphate and dextran sulfate. Inhibited by SERPINA5. In terms of biological role, thrombin, which cleaves bonds after Arg and Lys, converts fibrinogen to fibrin and activates factors V, VII, VIII, XIII, and, in complex with thrombomodulin, protein C. Functions in blood homeostasis, inflammation and wound healing. Activates coagulation factor XI (F11); activation is promoted by the contact with negatively charged surfaces. Triggers the production of pro-inflammatory cytokines, such as MCP-1/CCL2 and IL8/CXCL8, in endothelial cells. This chain is Prothrombin (F2), found in Sus scrofa (Pig).